A 466-amino-acid chain; its full sequence is tRNA-2-methylthio-N(6)-dimethylallyladenosine synthase (466 aa).

Positions 5 to 125 (RKLHIKSYGC…LPELLARAGR (121 aa)) constitute an MTTase N-terminal domain. 6 residues coordinate [4Fe-4S] cluster: Cys-14, Cys-50, Cys-88, Cys-166, Cys-170, and Cys-173. Residues 152–384 (RARGVSAFVT…QSLIDSQQAA (233 aa)) enclose the Radical SAM core domain. The TRAM domain occupies 387 to 449 (KAAIGTVVDV…RYSLLGELVA (63 aa)).

The protein belongs to the methylthiotransferase family. MiaB subfamily. As to quaternary structure, monomer. The cofactor is [4Fe-4S] cluster.

It localises to the cytoplasm. The enzyme catalyses N(6)-dimethylallyladenosine(37) in tRNA + (sulfur carrier)-SH + AH2 + 2 S-adenosyl-L-methionine = 2-methylsulfanyl-N(6)-dimethylallyladenosine(37) in tRNA + (sulfur carrier)-H + 5'-deoxyadenosine + L-methionine + A + S-adenosyl-L-homocysteine + 2 H(+). Its function is as follows. Catalyzes the methylthiolation of N6-(dimethylallyl)adenosine (i(6)A), leading to the formation of 2-methylthio-N6-(dimethylallyl)adenosine (ms(2)i(6)A) at position 37 in tRNAs that read codons beginning with uridine. In Bradyrhizobium sp. (strain BTAi1 / ATCC BAA-1182), this protein is tRNA-2-methylthio-N(6)-dimethylallyladenosine synthase.